Reading from the N-terminus, the 101-residue chain is Urease subunit beta (101 aa).

Belongs to the urease beta subunit family. As to quaternary structure, heterotrimer of UreA (gamma), UreB (beta) and UreC (alpha) subunits. Three heterotrimers associate to form the active enzyme.

It is found in the cytoplasm. The enzyme catalyses urea + 2 H2O + H(+) = hydrogencarbonate + 2 NH4(+). Its pathway is nitrogen metabolism; urea degradation; CO(2) and NH(3) from urea (urease route): step 1/1. In Azotobacter vinelandii (strain DJ / ATCC BAA-1303), this protein is Urease subunit beta.